Here is a 179-residue protein sequence, read N- to C-terminus: Translation initiation factor IF-3 (179 aa).

This sequence belongs to the IF-3 family. As to quaternary structure, monomer.

The protein localises to the cytoplasm. IF-3 binds to the 30S ribosomal subunit and shifts the equilibrium between 70S ribosomes and their 50S and 30S subunits in favor of the free subunits, thus enhancing the availability of 30S subunits on which protein synthesis initiation begins. The polypeptide is Translation initiation factor IF-3 (Buchnera aphidicola subsp. Schizaphis graminum (strain Sg)).